A 176-amino-acid chain; its full sequence is Vitamin K epoxide reductase complex subunit 1-like protein 1 (176 aa).

Over 1–13 (MAAPVLLRVSVPR) the chain is Cytoplasmic. Residues 14–36 (WERVARYAVCAAGILLSIYAYHV) traverse the membrane as a helical segment. The Lumenal portion of the chain corresponds to 37 to 87 (EREKERDPEHRALCDLGPWVKCSAALASRWGRGFGLLGSIFGKDGVLNQPN). Cysteine 50 and cysteine 58 are joined by a disulfide. Asparagine 87 contacts (S)-warfarin. A helical transmembrane segment spans residues 88 to 102 (SVFGLIFYILQLLLG). The Cytoplasmic segment spans residues 103-107 (MTASA). A helical transmembrane segment spans residues 108-135 (VAALVLMTSSIVSVVGSLYLAYILYFVL). At 136–138 (KEF) the chain is on the lumenal side. A disulfide bond links cysteine 139 and cysteine 142. Residues 139–160 (CIICVTTYVLNFLLLIINYKRL) traverse the membrane as a helical segment. Phylloquinone-binding residues include cysteine 142 and tyrosine 146. Tyrosine 146 provides a ligand contact to (S)-warfarin. The Cytoplasmic segment spans residues 161-176 (VYLNEAWKRQLQPKED).

This sequence belongs to the VKOR family. As to expression, detected in testis and lung.

Its subcellular location is the endoplasmic reticulum membrane. The enzyme catalyses phylloquinone + [protein]-disulfide + H2O = 2,3-epoxyphylloquinone + [protein]-dithiol. The catalysed reaction is phylloquinol + [protein]-disulfide = phylloquinone + [protein]-dithiol. With respect to regulation, inhibited by warfarin (coumadin). Warfarin locks VKORC1 in both redox states into the closed conformation. Involved in vitamin K metabolism. Can reduce inactive vitamin K 2,3-epoxide to active vitamin K, and may contribute to vitamin K-mediated protection against oxidative stress. Plays a role in vitamin K-dependent gamma-carboxylation of Glu residues in target proteins. The protein is Vitamin K epoxide reductase complex subunit 1-like protein 1 (Vkorc1l1) of Mus musculus (Mouse).